The sequence spans 49 residues: Large ribosomal subunit protein bL33B (49 aa).

Belongs to the bacterial ribosomal protein bL33 family.

Functionally, plays a role in sporulation at high temperatures. This chain is Large ribosomal subunit protein bL33B (rpmGB), found in Bacillus subtilis (strain 168).